The sequence spans 316 residues: Ribosomal RNA small subunit methyltransferase H (316 aa).

S-adenosyl-L-methionine contacts are provided by residues Ala-35 to His-37, Asp-55, Phe-84, Asp-105, and Gln-112.

Belongs to the methyltransferase superfamily. RsmH family.

Its subcellular location is the cytoplasm. The enzyme catalyses cytidine(1402) in 16S rRNA + S-adenosyl-L-methionine = N(4)-methylcytidine(1402) in 16S rRNA + S-adenosyl-L-homocysteine + H(+). Specifically methylates the N4 position of cytidine in position 1402 (C1402) of 16S rRNA. This is Ribosomal RNA small subunit methyltransferase H from Streptococcus pneumoniae (strain P1031).